Consider the following 855-residue polypeptide: Probable inactive ATP-dependent zinc metalloprotease FTSHI 4, chloroplastic (855 aa).

The transit peptide at 1–78 (MTFYISSSLT…SFESTESSVS (78 aa)) directs the protein to the chloroplast. The chain crosses the membrane as a helical span at residues 242–262 (VATFVVWSMRLALFVSLYVWI). Position 356-363 (356-363 (GPPGTGKT)) interacts with ATP.

Belongs to the AAA ATPase family. Homooligomer. Interacts with FtsHi2. As to expression, ubiquitous but preferentially expressed in young leaves.

It localises to the plastid. The protein resides in the chloroplast thylakoid membrane. In terms of biological role, functions in chloroplast biogenesis and chloroplast division. Required for plastid development during embryogenesis. Might be involved in chaperone functions or play a structural role in the thylakoid FtsH complex. This Arabidopsis thaliana (Mouse-ear cress) protein is Probable inactive ATP-dependent zinc metalloprotease FTSHI 4, chloroplastic.